The sequence spans 128 residues: Holin-like protein CidA (128 aa).

4 helical membrane passes run 4 to 24 (LLLTVIQIALLFIFARLINWV), 26 to 46 (ALLHINIPGSIIGIVILFTLL), 59 to 79 (GAAWLLGELLLFFIPSAVGVI), and 88 to 108 (FGVSILLVVIISTFVVMVSTG).

Belongs to the CidA/LrgA family. CidA subfamily.

The protein resides in the cell membrane. In terms of biological role, increases the activity of extracellular murein hydrolases possibly by mediating their export via hole formation. Inhibited by the antiholin-like proteins LrgAB. In an unstressed cell, the LrgAB products probably inhibit the function of the CidA protein. When a cell is stressed by the addition of antibiotics or by other factors in the environment, CidA possibly oligomerizes within the bacterial cell membrane, creating lesions that disrupt the proton motive force, which in turn results in loss of cell viability. These lesions are also hypothesized to regulate the subsequent cell lysis by either allowing the murein hydrolases access to the cell wall substrate and/or regulating their activity by a possible change in the cell wall pH that results from loss of membrane potential. This Bacillus subtilis (strain 168) protein is Holin-like protein CidA.